Reading from the N-terminus, the 420-residue chain is ATP phosphoribosyltransferase regulatory subunit (420 aa).

Belongs to the class-II aminoacyl-tRNA synthetase family. HisZ subfamily. As to quaternary structure, heteromultimer composed of HisG and HisZ subunits.

The protein resides in the cytoplasm. Its pathway is amino-acid biosynthesis; L-histidine biosynthesis; L-histidine from 5-phospho-alpha-D-ribose 1-diphosphate: step 1/9. Required for the first step of histidine biosynthesis. May allow the feedback regulation of ATP phosphoribosyltransferase activity by histidine. This chain is ATP phosphoribosyltransferase regulatory subunit, found in Bacillus anthracis (strain A0248).